The chain runs to 171 residues: Large ribosomal subunit protein uL10 (171 aa).

The protein belongs to the universal ribosomal protein uL10 family. In terms of assembly, part of the ribosomal stalk of the 50S ribosomal subunit. The N-terminus interacts with L11 and the large rRNA to form the base of the stalk. The C-terminus forms an elongated spine to which L12 dimers bind in a sequential fashion forming a multimeric L10(L12)X complex.

Forms part of the ribosomal stalk, playing a central role in the interaction of the ribosome with GTP-bound translation factors. The chain is Large ribosomal subunit protein uL10 from Zymomonas mobilis subsp. mobilis (strain ATCC 31821 / ZM4 / CP4).